The primary structure comprises 247 residues: 3-deoxy-manno-octulosonate cytidylyltransferase (247 aa).

It belongs to the KdsB family.

It localises to the cytoplasm. It carries out the reaction 3-deoxy-alpha-D-manno-oct-2-ulosonate + CTP = CMP-3-deoxy-beta-D-manno-octulosonate + diphosphate. It functions in the pathway nucleotide-sugar biosynthesis; CMP-3-deoxy-D-manno-octulosonate biosynthesis; CMP-3-deoxy-D-manno-octulosonate from 3-deoxy-D-manno-octulosonate and CTP: step 1/1. Its pathway is bacterial outer membrane biogenesis; lipopolysaccharide biosynthesis. Activates KDO (a required 8-carbon sugar) for incorporation into bacterial lipopolysaccharide in Gram-negative bacteria. This chain is 3-deoxy-manno-octulosonate cytidylyltransferase, found in Bdellovibrio bacteriovorus (strain ATCC 15356 / DSM 50701 / NCIMB 9529 / HD100).